The primary structure comprises 340 residues: CaiB/baiF CoA-transferase family protein ZK892.4 (340 aa).

Catalysis depends on Asp154, which acts as the Nucleophile.

This sequence belongs to the CoA-transferase III family.

This chain is CaiB/baiF CoA-transferase family protein ZK892.4, found in Caenorhabditis elegans.